A 121-amino-acid polypeptide reads, in one-letter code: Chromosome transmission fidelity protein 8 homolog (121 aa).

It belongs to the CTF8 family. In terms of assembly, component of the CTF18-RFC complex, which consists of CTF18, CTF8, DSCC1, RFC2, RFC3, RFC4 and RFC5. The CTF18-RFC complex does not interact with the Rad9/Rad1/Hus1 complex. The CTF18-RFC complex interacts with POLH. CTF18/CTF8/DSCC1 associate with PCNA. CTF8 exists as a dimer with DSCC1.

The protein localises to the nucleus. Functionally, chromosome cohesion factor involved in sister chromatid cohesion and fidelity of chromosome transmission. Component of one of the cell nuclear antigen loader complexes, CTF18-replication factor C (CTF18-RFC), which consists of CTF18, CTF8, DSCC1, RFC2, RFC3, RFC4 and RFC5. The CTF18-RFC complex binds to single-stranded and primed DNAs and has weak ATPase activity that is stimulated the presence of primed DNA, replication protein A (RPA) and proliferating cell nuclear antigen (PCNA). The CTF18-RFC complex catalyzes the ATP-dependent loading of PCNA onto primed and gapped DNA. It also interacts with and stimulates POLH, which is suggestive of a protein network that coordinates DNA repair, recombination and chromosome cohesion reactions with replication fork progression. The protein is Chromosome transmission fidelity protein 8 homolog of Homo sapiens (Human).